The chain runs to 509 residues: MDIQAAEISAILKQQIKDFGAEAQVSEIGQVLSVGDGIARVYGLDNVEAGEMVEFPGGVRGMALNLEEDNVGVVIFGSDRNIKEGDTVKRTGAIVDIPVGKGLLGRVVDPLGNPLDGKGPIEGVERRRVDVKAPGIIPRKSVHEPMQTGLKAIDALIPIGRGQRELIIGDRQTGKTAIAIDAILNQKPLNQGDDENQKLYCIYVAIGQKRSTVAQIAKTLEENGALEYTIIVAATASDPAPLQFLAPFAGCTLGEYFRDNAMHGLVVYDDLSKQAVAYRQMSLLLRRPPGREAYPGDVFYLHSRLLERAAKLNDENGNGSLTALPIIETQANDVSAYIPTNVISITDGQIFLETDLFYQGVRPAVNVGLSVSRVGSSAQIKAMKQVAGKIKGELAQYREMAAFAQFGSDLDAATQRLLNRGARLTELLKQGQFSPLKVEEQVVVIYAGVNGYLDKLPVADVGRYEQDLLRNIRSSHPGILDAIRSEKQISADTEAKLKSAVENFSKAFA.

An ATP-binding site is contributed by 169–176 (GDRQTGKT).

Belongs to the ATPase alpha/beta chains family. As to quaternary structure, F-type ATPases have 2 components, CF(1) - the catalytic core - and CF(0) - the membrane proton channel. CF(1) has five subunits: alpha(3), beta(3), gamma(1), delta(1), epsilon(1). CF(0) has three main subunits: a(1), b(2) and c(9-12). The alpha and beta chains form an alternating ring which encloses part of the gamma chain. CF(1) is attached to CF(0) by a central stalk formed by the gamma and epsilon chains, while a peripheral stalk is formed by the delta and b chains.

The protein resides in the cell inner membrane. It carries out the reaction ATP + H2O + 4 H(+)(in) = ADP + phosphate + 5 H(+)(out). Produces ATP from ADP in the presence of a proton gradient across the membrane. The alpha chain is a regulatory subunit. In Parvibaculum lavamentivorans (strain DS-1 / DSM 13023 / NCIMB 13966), this protein is ATP synthase subunit alpha.